The sequence spans 792 residues: Phenylalanine--tRNA ligase beta subunit (792 aa).

Residues 40–156 (FPRTENLIVG…AKLNDIDPLK (117 aa)) enclose the tRNA-binding domain. Residues 404–472 (LKDNLIDFDS…KKINVNNLEL (69 aa)) form the B5 domain. Positions 450, 456, 459, and 460 each coordinate Mg(2+).

The protein belongs to the phenylalanyl-tRNA synthetase beta subunit family. Type 1 subfamily. As to quaternary structure, tetramer of two alpha and two beta subunits. Mg(2+) serves as cofactor.

Its subcellular location is the cytoplasm. The enzyme catalyses tRNA(Phe) + L-phenylalanine + ATP = L-phenylalanyl-tRNA(Phe) + AMP + diphosphate + H(+). The chain is Phenylalanine--tRNA ligase beta subunit from Malacoplasma penetrans (strain HF-2) (Mycoplasma penetrans).